A 493-amino-acid polypeptide reads, in one-letter code: Ribose import ATP-binding protein RbsA (493 aa).

ABC transporter domains lie at 3–239 and 246–493; these read IEMK…VGRE and KRTP…TGGR. Position 35–42 (35–42) interacts with ATP; the sequence is GENGAGKS.

This sequence belongs to the ABC transporter superfamily. Ribose importer (TC 3.A.1.2.1) family. As to quaternary structure, the complex is composed of an ATP-binding protein (RbsA), two transmembrane proteins (RbsC) and a solute-binding protein (RbsB).

It is found in the cell membrane. It catalyses the reaction D-ribose(out) + ATP + H2O = D-ribose(in) + ADP + phosphate + H(+). Functionally, part of the ABC transporter complex RbsABC involved in ribose import. Responsible for energy coupling to the transport system. The sequence is that of Ribose import ATP-binding protein RbsA from Bacillus subtilis (strain 168).